The sequence spans 162 residues: MASTSHNPFYAAMQPQAQHWGATSPTSTGAGYDRPSAGYPAYTGYAAAGTSHPAPSSSSPSTALALYNPSSLYGLYYNEAVHGPFATGLQSNPFTPGLAPLSTVSRPSYATEDPLRQRYPATSANPHDPLNWITEDLFAIRMERAAISQQRTPLRSASVAAR.

Belongs to the allantoicase family. Homohexamer. As to expression, expressed in zygote.

It carries out the reaction allantoate + H2O = (S)-ureidoglycolate + urea. It functions in the pathway nitrogen metabolism; (S)-allantoin degradation; (S)-ureidoglycolate from allantoate (aminidohydrolase route): step 1/1. Catalyzes the degradation of allantoate to (-)-ureidoglycolate and (+)-ureidoglycolate to glyoxylate. The protein is Allantoicase of Chlamydomonas reinhardtii (Chlamydomonas smithii).